A 447-amino-acid polypeptide reads, in one-letter code: Kynurenine 3-monooxygenase (447 aa).

Belongs to the aromatic-ring hydroxylase family. KMO subfamily. Requires FAD as cofactor.

The enzyme catalyses L-kynurenine + NADPH + O2 + H(+) = 3-hydroxy-L-kynurenine + NADP(+) + H2O. It participates in cofactor biosynthesis; NAD(+) biosynthesis; quinolinate from L-kynurenine: step 1/3. Catalyzes the hydroxylation of L-kynurenine (L-Kyn) to form 3-hydroxy-L-kynurenine (L-3OHKyn). Required for synthesis of quinolinic acid. This Flavobacterium psychrophilum (strain ATCC 49511 / DSM 21280 / CIP 103535 / JIP02/86) protein is Kynurenine 3-monooxygenase.